Here is a 153-residue protein sequence, read N- to C-terminus: Large ribosomal subunit protein bL9 (153 aa).

It belongs to the bacterial ribosomal protein bL9 family.

In terms of biological role, binds to the 23S rRNA. This chain is Large ribosomal subunit protein bL9, found in Tropheryma whipplei (strain Twist) (Whipple's bacillus).